A 430-amino-acid polypeptide reads, in one-letter code: Serine--tRNA ligase (430 aa).

L-serine is bound at residue 237-239; the sequence is TAE. Position 268-270 (268-270) interacts with ATP; that stretch reads RSE. Glutamate 291 provides a ligand contact to L-serine. 355–358 is an ATP binding site; it reads EISS. Serine 391 is a binding site for L-serine.

Belongs to the class-II aminoacyl-tRNA synthetase family. Type-1 seryl-tRNA synthetase subfamily. In terms of assembly, homodimer. The tRNA molecule binds across the dimer.

It is found in the cytoplasm. It catalyses the reaction tRNA(Ser) + L-serine + ATP = L-seryl-tRNA(Ser) + AMP + diphosphate + H(+). The enzyme catalyses tRNA(Sec) + L-serine + ATP = L-seryl-tRNA(Sec) + AMP + diphosphate + H(+). It participates in aminoacyl-tRNA biosynthesis; selenocysteinyl-tRNA(Sec) biosynthesis; L-seryl-tRNA(Sec) from L-serine and tRNA(Sec): step 1/1. Its function is as follows. Catalyzes the attachment of serine to tRNA(Ser). Is also able to aminoacylate tRNA(Sec) with serine, to form the misacylated tRNA L-seryl-tRNA(Sec), which will be further converted into selenocysteinyl-tRNA(Sec). The protein is Serine--tRNA ligase of Yersinia pseudotuberculosis serotype O:1b (strain IP 31758).